A 485-amino-acid polypeptide reads, in one-letter code: U4/U6 small nuclear ribonucleoprotein Prp31 homolog (485 aa).

Disordered regions lie at residues 1–36 and 329–361; these read MATL…EEDV and IEKW…RRLR. Positions 11-36 are enriched in acidic residues; sequence DLDELSDNEAELDENDGDVGKEEEDV. Residues 216–334 form the Nop domain; it reads IAPNLSAIVG…IRKKIEKWQE (119 aa). Over residues 334–348 the composition is skewed to pro residues; it reads EPPPARQPKPLPVPD. The segment covering 352 to 361 has biased composition (basic residues); sequence KKRRGGRRLR. Residues 352–365 carry the Nuclear localization signal motif; that stretch reads KKRRGGRRLRKMKE.

Belongs to the PRP31 family. In terms of assembly, component of the U4/U6-U5 tri-snRNP complex composed of the U4, U6 and U5 snRNAs and pre-mRNA-splicing factors. Interacts with STA1 and SOP1.

It localises to the nucleus. The protein resides in the cajal body. Involved in pre-mRNA splicing. Required for the assembly of the U4/U5/U6 tri-snRNP complex, one of the building blocks of the spliceosome. Functions in association with STA1 and ZOP1 in spliceosome dynamics and pre-mRNA splicing. Required for transcriptional regulation and pre-mRNA splicing of cold-responsive genes, such as LTI78/RD29A, KIN2/COR6.6 or COR15A, especially under cold stress. May play a role in stress response. Involved in transcriptional gene silencing of endogenous transposable elements, independently of the RNA-directed DNA methylation (RdDM) pathway. Seems not to participate in the small RNA biogenesis of the RdDM pathway. This is U4/U6 small nuclear ribonucleoprotein Prp31 homolog from Arabidopsis thaliana (Mouse-ear cress).